Here is a 461-residue protein sequence, read N- to C-terminus: D-phenylhydantoinase (461 aa).

A divalent metal cation contacts are provided by His59, His61, and Lys151. The residue at position 151 (Lys151) is an N6-carboxylysine. Residue Tyr156 coordinates substrate. His182 and His239 together coordinate a divalent metal cation. Substrate is bound at residue Ser286. Asp313 is a binding site for a divalent metal cation. Asn335 provides a ligand contact to substrate.

The protein belongs to the metallo-dependent hydrolases superfamily. Hydantoinase/dihydropyrimidinase family. In terms of assembly, homotetramer. The cofactor is a divalent metal cation. Post-translationally, carboxylation allows a single lysine to coordinate two divalent metal cations.

The catalysed reaction is D-5-phenylhydantoin + H2O = N-carbamoyl-D-phenylglycine + H(+). In terms of biological role, catalyzes the stereospecific hydrolysis of the cyclic amide bond of D-hydantoin derivatives with an aromatic side chains at the 5'-position. Has no activity on dihydropyrimidines. The physiological function is unknown. The protein is D-phenylhydantoinase of Escherichia coli O6:K15:H31 (strain 536 / UPEC).